A 340-amino-acid polypeptide reads, in one-letter code: rRNA adenine N-6-methyltransferase (340 aa).

The span at 1 to 25 (MAGPQDRPRGRGPSSGRPQRPVGGR) shows a compositional bias: low complexity. The disordered stretch occupies residues 1-37 (MAGPQDRPRGRGPSSGRPQRPVGGRSQRDRDRRVLGQ). S-adenosyl-L-methionine-binding residues include Asn38, Leu40, Gly65, Glu86, Asp111, and Ala127. The disordered stretch occupies residues 284 to 340 (RGGAARGPGDQRGRRGRPGGGPRPDGRAGGGPRRDAGGRRTGDGRGGRPRPPRGGQA). The span at 301–314 (PGGGPRPDGRAGGG) shows a compositional bias: gly residues. The segment covering 315-329 (PRRDAGGRRTGDGRG) has biased composition (basic and acidic residues).

The protein belongs to the class I-like SAM-binding methyltransferase superfamily. rRNA adenine N(6)-methyltransferase family.

In terms of biological role, involved in erythromycin resistance. This is rRNA adenine N-6-methyltransferase (ermA) from Aeromicrobium erythreum (strain ATCC 51598 / DSM 8599 / JCM 8359 / NBRC 15406 / NRRL B-3381).